The sequence spans 447 residues: N-succinylarginine dihydrolase (447 aa).

Substrate is bound by residues Ala19–Ser28, Asn110, and His137–Arg138. The active site involves Glu174. Arg212 provides a ligand contact to substrate. His248 is a catalytic residue. 2 residues coordinate substrate: Asp250 and Asn359. Cys365 functions as the Nucleophile in the catalytic mechanism.

Belongs to the succinylarginine dihydrolase family. Homodimer.

The enzyme catalyses N(2)-succinyl-L-arginine + 2 H2O + 2 H(+) = N(2)-succinyl-L-ornithine + 2 NH4(+) + CO2. It functions in the pathway amino-acid degradation; L-arginine degradation via AST pathway; L-glutamate and succinate from L-arginine: step 2/5. Functionally, catalyzes the hydrolysis of N(2)-succinylarginine into N(2)-succinylornithine, ammonia and CO(2). This chain is N-succinylarginine dihydrolase, found in Escherichia coli (strain SMS-3-5 / SECEC).